We begin with the raw amino-acid sequence, 53 residues long: Sec-independent protein translocase protein TatA (53 aa).

Residues 1 to 21 (MGMSFSHLLIVLLIIFVLFGA) form a helical membrane-spanning segment.

Belongs to the TatA/E family. As to quaternary structure, the Tat system comprises two distinct complexes: a TatABC complex, containing multiple copies of TatA, TatB and TatC subunits, and a separate TatA complex, containing only TatA subunits. Substrates initially bind to the TatABC complex, which probably triggers association of the separate TatA complex to form the active translocon.

The protein localises to the cell inner membrane. Part of the twin-arginine translocation (Tat) system that transports large folded proteins containing a characteristic twin-arginine motif in their signal peptide across membranes. TatA could form the protein-conducting channel of the Tat system. The polypeptide is Sec-independent protein translocase protein TatA (Rickettsia rickettsii (strain Iowa)).